Consider the following 520-residue polypeptide: CBL-interacting serine/threonine-protein kinase 18 (520 aa).

Disordered stretches follow at residues 1–29 (MAQA…PHPK) and 48–67 (TDKD…SPRN). Positions 17–29 (PDPPPPPPPPHPK) are enriched in pro residues. The segment covering 55-66 (SPQSPRSPRSPR) has biased composition (low complexity). The Protein kinase domain maps to 74 to 328 (YELGKLLGHG…IPEIMKNRWF (255 aa)). Residues 80 to 88 (LGHGTFAKV) and Lys-103 contribute to the ATP site. Asp-196 functions as the Proton acceptor in the catalytic mechanism. Residues 214-243 (DFGLSAVAEQLRQDGLCHTFCGTPAYIAPE) are activation loop. The residue at position 218 (Ser-218) is a Phosphoserine. Phosphothreonine is present on Thr-232. Residues 349–368 (EDEEEEASSSGRSSTVSESD) form a disordered region. Residues 356–366 (SSSGRSSTVSE) are compositionally biased toward low complexity. In terms of domain architecture, NAF spans 382–406 (PRPSSLNAFDIISFSSGFDLSGLFE). The PPI stretch occupies residues 410-439 (GEGTRFVSGAPVSKIISKLEEIAKIVSFTV).

This sequence belongs to the protein kinase superfamily. CAMK Ser/Thr protein kinase family. SNF1 subfamily. As to quaternary structure, interacts with CBL1 and CBL9. Mn(2+) serves as cofactor.

It catalyses the reaction L-seryl-[protein] + ATP = O-phospho-L-seryl-[protein] + ADP + H(+). It carries out the reaction L-threonyl-[protein] + ATP = O-phospho-L-threonyl-[protein] + ADP + H(+). Functionally, CIPK serine-threonine protein kinases interact with CBL proteins. Binding of a CBL protein to the regulatory NAF domain of CIPK protein lead to the activation of the kinase in a calcium-dependent manner. This Arabidopsis thaliana (Mouse-ear cress) protein is CBL-interacting serine/threonine-protein kinase 18 (CIPK18).